Here is a 1749-residue protein sequence, read N- to C-terminus: Intraflagellar transport protein 172 homolog (1749 aa).

Met-1 carries the N-acetylmethionine modification. A Glycyl lysine isopeptide (Lys-Gly) (interchain with G-Cter in SUMO1) cross-link involves residue Lys-4. 9 WD repeats span residues 14–53, 64–103, 110–148, 150–191, 195–233, 238–278, 284–323, 483–520, and 521–559; these read DGAA…RDKF, RKSY…GDKK, IQTS…SSTI, GTES…ESQG, NHPC…QTFD, PQER…WEEA, ANLY…SIYK, SHES…CSKT, and MILN…ERVT. The stretch at 593 to 624 is one TPR 1 repeat; the sequence is DEGLIEFGTAIDDGNYTRATAFLETLEMTPET. Arg-672 carries the post-translational modification Omega-N-methylarginine. 13 TPR repeats span residues 692–725, 809–842, 854–887, 912–945, 947–970, 971–1004, 1042–1075, 1142–1175, 1276–1309, 1345–1378, 1411–1445, 1447–1477, and 1574–1607; these read EKNY…EECI, GELY…MKAV, VRLE…IKAI, SKYY…KDAI, MYTQ…PEDV, SVLY…DLAI, EGRL…EEAY, PEIH…KEAV, VEGL…GSSG, IGKH…NKAK, GVDV…LHKY, ALYA…NPQN, and DKAF…TDAI.

The protein belongs to the IFT172 family. As to quaternary structure, interacts with IFT88. Interacts with IFT57. Interacts with RABL2/RABL2A; binds preferentially to GDP-bound RABL2. In terms of tissue distribution, co-localizes with RABL2/RABL2A in the midpiece of elongated spermatids within the testis (at protein level). Expressed in the flagellum of elongated spermatids and sperm in the testis lumen (at protein level).

Its subcellular location is the cell projection. It localises to the cilium. Required for the maintenance and formation of cilia. Plays an indirect role in hedgehog (Hh) signaling, cilia being required for all activity of the hedgehog pathway. The protein is Intraflagellar transport protein 172 homolog (Ift172) of Mus musculus (Mouse).